A 483-amino-acid chain; its full sequence is Serralysin (483 aa).

Histidine 184 provides a ligand contact to Zn(2+). Residue glutamate 185 is part of the active site. Zn(2+)-binding residues include histidine 188 and histidine 194. Residues arginine 263, aspartate 266, aspartate 295, glycine 297, glycine 298, aspartate 300, threonine 337, and glutamate 339 each contribute to the Ca(2+) site. Hemolysin-type calcium-binding repeat units lie at residues 342–359 (IGGSGNDILIGNDAENIL) and 360–377 (KGGAGDDIIYGGLGADQL).

It belongs to the peptidase M10B family. Zn(2+) is required as a cofactor. Requires Ca(2+) as cofactor.

It localises to the secreted. It catalyses the reaction Preferential cleavage of bonds with hydrophobic residues in P1'.. Inhibited by 8 mM 1,10-phenanthroline and 10 mM EDTA, but not by PMSF. Involved in the inhibition of insect antibacterial peptides. Reduces the antibacterial activity of G.mellonella hemolymph by 50%. Reduces the antibacterial activity of cecropin A by 80% and cecropin B by 75%. This is Serralysin from Photorhabdus sp. (strain Az29).